A 208-amino-acid chain; its full sequence is Ribosomal RNA small subunit methyltransferase G (208 aa).

S-adenosyl-L-methionine-binding positions include glycine 76, leucine 81, 127-128 (VE), and arginine 142.

It belongs to the methyltransferase superfamily. RNA methyltransferase RsmG family.

The protein localises to the cytoplasm. The enzyme catalyses guanosine(527) in 16S rRNA + S-adenosyl-L-methionine = N(7)-methylguanosine(527) in 16S rRNA + S-adenosyl-L-homocysteine. In terms of biological role, specifically methylates the N7 position of guanine in position 527 of 16S rRNA. The sequence is that of Ribosomal RNA small subunit methyltransferase G from Legionella pneumophila (strain Corby).